A 37-amino-acid polypeptide reads, in one-letter code: Large ribosomal subunit protein bL36 (37 aa).

Belongs to the bacterial ribosomal protein bL36 family.

In Ureaplasma urealyticum serovar 10 (strain ATCC 33699 / Western), this protein is Large ribosomal subunit protein bL36.